The primary structure comprises 186 residues: Signal peptidase I P (186 aa).

Residues 1 to 15 (MTKEKVFKKKSSILE) lie on the Cytoplasmic side of the membrane. The chain crosses the membrane as a helical span at residues 16-35 (WGKAIVIAVILALLIRNFLF). The Extracellular portion of the chain corresponds to 36-186 (EPYVVEGKSM…FPFSNMRKAK (151 aa)). Active-site residues include Ser44 and Lys86.

Belongs to the peptidase S26 family.

Its subcellular location is the cell membrane. The catalysed reaction is Cleavage of hydrophobic, N-terminal signal or leader sequences from secreted and periplasmic proteins.. This is Signal peptidase I P (sipP) from Bacillus subtilis subsp. natto.